Reading from the N-terminus, the 103-residue chain is Probable protease inhibitor Egf0.4b (103 aa).

The first 22 residues, 1–22 (MMSEKFALVLLVACIAFIGIET), serve as a signal peptide directing secretion. Positions 35-87 (CGENEAYDSMRRGCEERCDDHNPTFCFKFTTVCWCEKGYVRDKSDTCIKVEDC) constitute a TIL domain.

The protein belongs to the polydnaviridae EGF-like motif protein family.

In Microplitis demolitor bracovirus (isolate Webb) (MdBV), this protein is Probable protease inhibitor Egf0.4b (O11).